A 137-amino-acid chain; its full sequence is Nucleoside diphosphate kinase (137 aa).

ATP contacts are provided by Lys11, Phe59, Arg87, Thr93, Arg104, and Asn114. Catalysis depends on His117, which acts as the Pros-phosphohistidine intermediate.

It belongs to the NDK family. Homotetramer. The cofactor is Mg(2+).

The protein resides in the cytoplasm. The catalysed reaction is a 2'-deoxyribonucleoside 5'-diphosphate + ATP = a 2'-deoxyribonucleoside 5'-triphosphate + ADP. The enzyme catalyses a ribonucleoside 5'-diphosphate + ATP = a ribonucleoside 5'-triphosphate + ADP. Major role in the synthesis of nucleoside triphosphates other than ATP. The ATP gamma phosphate is transferred to the NDP beta phosphate via a ping-pong mechanism, using a phosphorylated active-site intermediate. The sequence is that of Nucleoside diphosphate kinase from Frankia alni (strain DSM 45986 / CECT 9034 / ACN14a).